Reading from the N-terminus, the 345-residue chain is MIETDALSGGTPRRLVTQQPLSSQEEALERALRPKALDDYVGQKKAREQLEIFIEAAKKRGEALDHVLLFGPPGLGKTTLAHIISRELGVNLRQTSGPVLERAGDLAALLTNLEPHDVLFIDEIHRLSPVVEEILYPALEDYQIDIMIGEGPAARSVKIDLPPFTLVGATTRAGMLTNPLRDRFGIVARLEFYTPEELTRIVRRSAGLLEVQLGEEGAFEVARRSRGTPRIANRLLRRVRDFAEVRADGVVTAAVADAALSMLDVDPAGLDVMDRKLLAAVLEKFGGGPVGLDNVAAAIGESTDTIEDVIEPYLIQQGYLQRTPRGRMATALAWTHFGFVPPERV.

A disordered region spans residues 1–22; it reads MIETDALSGGTPRRLVTQQPLS. The tract at residues 4-193 is large ATPase domain (RuvB-L); that stretch reads TDALSGGTPR…FGIVARLEFY (190 aa). ATP-binding positions include L32, R33, G74, K77, T78, T79, 140-142, R183, Y193, and R230; that span reads EDY. Residue T78 participates in Mg(2+) binding. Positions 194-264 are small ATPAse domain (RuvB-S); that stretch reads TPEELTRIVR…VADAALSMLD (71 aa). Residues 267 to 345 form a head domain (RuvB-H) region; it reads PAGLDVMDRK…HFGFVPPERV (79 aa). DNA contacts are provided by R322 and R327.

Belongs to the RuvB family. As to quaternary structure, homohexamer. Forms an RuvA(8)-RuvB(12)-Holliday junction (HJ) complex. HJ DNA is sandwiched between 2 RuvA tetramers; dsDNA enters through RuvA and exits via RuvB. An RuvB hexamer assembles on each DNA strand where it exits the tetramer. Each RuvB hexamer is contacted by two RuvA subunits (via domain III) on 2 adjacent RuvB subunits; this complex drives branch migration. In the full resolvosome a probable DNA-RuvA(4)-RuvB(12)-RuvC(2) complex forms which resolves the HJ.

The protein localises to the cytoplasm. The catalysed reaction is ATP + H2O = ADP + phosphate + H(+). Functionally, the RuvA-RuvB-RuvC complex processes Holliday junction (HJ) DNA during genetic recombination and DNA repair, while the RuvA-RuvB complex plays an important role in the rescue of blocked DNA replication forks via replication fork reversal (RFR). RuvA specifically binds to HJ cruciform DNA, conferring on it an open structure. The RuvB hexamer acts as an ATP-dependent pump, pulling dsDNA into and through the RuvAB complex. RuvB forms 2 homohexamers on either side of HJ DNA bound by 1 or 2 RuvA tetramers; 4 subunits per hexamer contact DNA at a time. Coordinated motions by a converter formed by DNA-disengaged RuvB subunits stimulates ATP hydrolysis and nucleotide exchange. Immobilization of the converter enables RuvB to convert the ATP-contained energy into a lever motion, pulling 2 nucleotides of DNA out of the RuvA tetramer per ATP hydrolyzed, thus driving DNA branch migration. The RuvB motors rotate together with the DNA substrate, which together with the progressing nucleotide cycle form the mechanistic basis for DNA recombination by continuous HJ branch migration. Branch migration allows RuvC to scan DNA until it finds its consensus sequence, where it cleaves and resolves cruciform DNA. This is Holliday junction branch migration complex subunit RuvB from Laribacter hongkongensis (strain HLHK9).